The primary structure comprises 430 residues: Adenylosuccinate synthetase (430 aa).

GTP contacts are provided by residues 12 to 18 and 40 to 42; these read GDEGKGK and GHT. The active-site Proton acceptor is Asp-13. Residues Asp-13 and Gly-40 each coordinate Mg(2+). IMP-binding positions include 13–16, 38–41, Thr-128, Arg-142, Gln-223, Thr-238, and Arg-302; these read DEGK and NAGH. His-41 serves as the catalytic Proton donor. 298 to 304 serves as a coordination point for substrate; sequence TVTKRPR. Residues Arg-304, 330–332, and 412–414 contribute to the GTP site; these read CVD and SVG.

Belongs to the adenylosuccinate synthetase family. Homodimer. It depends on Mg(2+) as a cofactor.

The protein resides in the cytoplasm. It carries out the reaction IMP + L-aspartate + GTP = N(6)-(1,2-dicarboxyethyl)-AMP + GDP + phosphate + 2 H(+). It participates in purine metabolism; AMP biosynthesis via de novo pathway; AMP from IMP: step 1/2. Functionally, plays an important role in the de novo pathway of purine nucleotide biosynthesis. Catalyzes the first committed step in the biosynthesis of AMP from IMP. In Ligilactobacillus salivarius (strain UCC118) (Lactobacillus salivarius), this protein is Adenylosuccinate synthetase.